Here is a 557-residue protein sequence, read N- to C-terminus: Autophagy-related protein 17 (557 aa).

Disordered stretches follow at residues 1-25 (MSSSESSSASGGGPPDAEPSQTEQQ) and 204-227 (ASSRSSSSPSSSSASNSSLPSMSS). The segment covering 205–227 (SSRSSSSPSSSSASNSSLPSMSS) has biased composition (low complexity). Coiled-coil stretches lie at residues 334–355 (DRIGEMESSLENVLAQRDALRS) and 428–458 (RHVRQRVEKVLRDAKHKLDQLYEEDVNAREA). The disordered stretch occupies residues 495–532 (AVSEQANDEEPTAGEREQRGGGQENHLSAVGDNTEVDE).

It belongs to the ATG17 family.

It is found in the cytoplasm. The protein localises to the preautophagosomal structure membrane. In terms of biological role, autophagy-specific protein that functions in response to autophagy-inducing signals as a scaffold to recruit other ATG proteins to organize pre-autophagosomal structure (PAS) formation. Modulates the timing and magnitude of the autophagy response, such as the size of the sequestering vesicles. Plays particularly a role in pexophagy and nucleophagy. This chain is Autophagy-related protein 17 (atg17), found in Aspergillus clavatus (strain ATCC 1007 / CBS 513.65 / DSM 816 / NCTC 3887 / NRRL 1 / QM 1276 / 107).